Reading from the N-terminus, the 1277-residue chain is MAPSKKAGKKVTPKKAAGNNAKSKVAKADWKEGFKKKQVGVTDMTLLTTISNESINENLQKRWTNGEIYTYIGAVLISVNPFRDLGIYTDEVLQRYRGKNRLEVPPHVFSIAESAYYNMNAYHENQCVIISGESGAGKTEAAKQIMQYIAAVSGGQDSGIQEIKDMVLATNPLLESFGCAKTLRNNNSSRHGKYLEIMFNDRGEPVGAQITNYLLEKGRVVGQIENERNFHIFYQFTKAASDEQREAFGLQGPDAYAYTSMSNCLDVQDIDDTRDFEGTINAMQIIGLSPEEQNEIFKMLATILWLGNVQFDENEEGNSVISDTGVTDFVAYLMEVDAATVQKALTTRVMETTRGGRRGSVYDVPLNPSQATSGRDALSKAIYNNLFEWIVAKINVSLKTRSAYSHIIGILDIFGFEIFEDNSFEQLCINYVNEKLQQIFIELTLKTEQEEYVREQIKWTPIKFFNNKVVCDLIEERRPPGIFAALNDACATAHADPTAADNSFIQRSAGLSSNGHFESRGAQFLVRHYAGDVMYNVAGMTDKNKDSLIKDLLDLIGTSGNAFLQNLFPDRPDPNSKKRPPTASDRIKQSAGALVDKLMKSQPSYIRTIKPNGNRSPSEYDTKAILHQIKYLGLQENIRVRRAGFAYRNTFEKMVERFYLLSPKTSYAGEYIWTGDAKSGCEQILKDTGIAKDEWQMGVTKAFIKNPETLFALETMRDRYWHNMAARIQRAFRNYMRYKHECARRIQRFWKNNKEALVYAQVRDYGHQLLAGRKERRRFSLLSYRRFMGDYLDISGKSSLGEEIGEACSLGREPVKFSASARLLVSKLGRSSKPSPRYIVLTPKAVYIVIVTAKDGQAMFSLERKIALVTIKSIQMSTLRDDWFTLNLGPTEEGDPVLSCYFKTEFVTHLMQLTQAGINFNIAPTIEYTKKKEKKAQIKFVKDETIPKDDVYKSHTVHVPSGEPADSVSRPPAKRKAGVVRPITQGKLLRAGGPSKPNNSRPRPTAQPLPGQSKPAVATPSVVSTPAAAAVVSKPKPAASTPAAVRAPAVTPAARSVPPPPPPPPPARAEPEKEMYRAKFDFQGQEGEMSLTKDDEVELIEKDENGWWLVKKDGVEAWAPYNYLERIAPKAAPAPPPPPARPRPTSTVPKPPLSSTTADASAKPVAVFPGMGASNGGPTPWKKSAATTDSTPNSSRPGSAAAKVPPPVAAKPKPPVVAPKPGVPKPGGKPALPTTARPAPSGGGAAAGRLGGGGGGPGQLDLAAALAKRAQRIADED.

Basic residues predominate over residues 1–13 (MAPSKKAGKKVTP). Residues 1 to 27 (MAPSKKAGKKVTPKKAAGNNAKSKVAK) are disordered. The Myosin motor domain occupies 39 to 718 (VGVTDMTLLT…TLFALETMRD (680 aa)). Residue 132–139 (GESGAGKT) participates in ATP binding. Phosphoserine is present on serine 360. Residues 407–489 (IIGILDIFGF…PGIFAALNDA (83 aa)) are actin-binding. The interval 567 to 587 (LFPDRPDPNSKKRPPTASDRI) is disordered. 2 consecutive IQ domains span residues 722–742 (HNMA…KHEC) and 743–768 (ARRI…YGHQ). The region spanning 776 to 965 (RRRFSLLSYR…TVHVPSGEPA (190 aa)) is the TH1 domain. Disordered stretches follow at residues 952–1072 (YKSH…AEPE) and 1129–1259 (PKAA…GPGQ). Low complexity predominate over residues 1015–1056 (PAVATPSVVSTPAAAAVVSKPKPAASTPAAVRAPAVTPAARS). Residues 1057–1068 (VPPPPPPPPPAR) show a composition bias toward pro residues. An SH3 domain is found at 1071-1129 (PEKEMYRAKFDFQGQEGEMSLTKDDEVELIEKDENGWWLVKKDGVEAWAPYNYLERIAP). Residues 1132–1142 (APAPPPPPARP) are compositionally biased toward pro residues. 2 stretches are compositionally biased toward polar residues: residues 1145 to 1159 (TSTV…TTAD) and 1185 to 1197 (AATT…SSRP). Over residues 1204–1224 (VPPPVAAKPKPPVVAPKPGVP) the composition is skewed to pro residues. The span at 1226 to 1240 (PGGKPALPTTARPAP) shows a compositional bias: low complexity. Residues 1241 to 1258 (SGGGAAAGRLGGGGGGPG) are compositionally biased toward gly residues.

Belongs to the TRAFAC class myosin-kinesin ATPase superfamily. Myosin family. Phosphorylation of the TEDS site (Ser-360) is required for the polarization of the actin cytoskeleton. Phosphorylation probably activates the myosin-I ATPase activity.

The protein resides in the cytoplasm. Its subcellular location is the cytoskeleton. It is found in the actin patch. Its function is as follows. Type-I myosin implicated in the organization of the actin cytoskeleton. Required for proper actin cytoskeleton polarization. At the cell cortex, assembles in patch-like structures together with proteins from the actin-polymerizing machinery and promotes actin assembly. Functions as actin nucleation-promoting factor (NPF) for the Arp2/3 complex. The sequence is that of Myosin-1 (MYO1) from Coprinopsis cinerea (strain Okayama-7 / 130 / ATCC MYA-4618 / FGSC 9003) (Inky cap fungus).